The sequence spans 362 residues: Biotin synthase (362 aa).

Positions 39 to 267 constitute a Radical SAM core domain; it reads NVVQVSTLLS…ETQVRLSAGR (229 aa). Residues C54, C58, and C61 each contribute to the [4Fe-4S] cluster site. [2Fe-2S] cluster-binding residues include C98, C130, C190, and R262. Residues 317–362 form a disordered region; that stretch reads PFTKVSQPTTVEAKDSRYESLGEKPKWSRPSHTIEKNLELSGKGKN. Over residues 328-354 the composition is skewed to basic and acidic residues; the sequence is EAKDSRYESLGEKPKWSRPSHTIEKNL.

The protein belongs to the radical SAM superfamily. Biotin synthase family. In terms of assembly, homodimer. [4Fe-4S] cluster is required as a cofactor. Requires [2Fe-2S] cluster as cofactor.

The enzyme catalyses (4R,5S)-dethiobiotin + (sulfur carrier)-SH + 2 reduced [2Fe-2S]-[ferredoxin] + 2 S-adenosyl-L-methionine = (sulfur carrier)-H + biotin + 2 5'-deoxyadenosine + 2 L-methionine + 2 oxidized [2Fe-2S]-[ferredoxin]. It functions in the pathway cofactor biosynthesis; biotin biosynthesis; biotin from 7,8-diaminononanoate: step 2/2. Its function is as follows. Catalyzes the conversion of dethiobiotin (DTB) to biotin by the insertion of a sulfur atom into dethiobiotin via a radical-based mechanism. In Flavobacterium psychrophilum (strain ATCC 49511 / DSM 21280 / CIP 103535 / JIP02/86), this protein is Biotin synthase.